The following is a 562-amino-acid chain: Putative transport protein PC1_1686 (562 aa).

6 helical membrane-spanning segments follow: residues 8–28 (LLNG…LCLG), 32–52 (LGPV…LLGQ), 66–86 (FMLF…SIFF), 93–113 (FMLA…LGKF), 116–136 (WGIG…PVLV), and 158–178 (HLSL…IFGA). RCK C-terminal domains are found at residues 202–288 (LDAD…NFRD) and 292–373 (VFDR…RIGF). 5 consecutive transmembrane segments (helical) span residues 383 to 403 (LLAF…TIQF), 406 to 426 (FTFG…LGFL), 447 to 467 (FGLM…INSS), 478 to 498 (SGLI…AYVL), and 537 to 557 (GTYA…VIIW).

Belongs to the AAE transporter (TC 2.A.81) family. YbjL subfamily.

It localises to the cell membrane. This is Putative transport protein PC1_1686 from Pectobacterium carotovorum subsp. carotovorum (strain PC1).